A 921-amino-acid chain; its full sequence is Short transient receptor potential channel 3 (921 aa).

Residues 1–73 (MSTKVRKCKE…PPFSHGPDLS (73 aa)) are disordered. The Cytoplasmic segment spans residues 1–459 (MSTKVRKCKE…KILRSPFMKF (459 aa)). Residues 19–31 (PEEEEDEGEDEGA) are compositionally biased toward acidic residues. 4 ANK repeats span residues 111 to 140 (AEEE…TLNV), 146 to 175 (MGQN…LARI), 177 to 203 (DALL…FAAS), and 232 to 261 (PDIT…RIER). Residue glutamate 158 coordinates Ca(2+). A helical transmembrane segment spans residues 460–477 (VAHAASFIIFLGLLVFNA). Residues 478–508 (SDRFEGITTLPNITVTDYPKQIFRVKTTQFT) lie on the Extracellular side of the membrane. Asparagine 489 carries an N-linked (GlcNAc...) asparagine glycan. A helical transmembrane segment spans residues 509–527 (WTEMLIMVWVLGMMWSECK). The Ca(2+) site is built by glutamate 525, glutamate 528, and asparagine 543. Over 528 to 540 (ELWLEGPREYILQ) the chain is Cytoplasmic. A helical transmembrane segment spans residues 541–562 (LWNVLDFGMLSIFIAAFTARFL). Residues 563-606 (AFLQATKAQQYVDSYVQESDLSEVTLPPEIQYFTYARDKWLPSD) are Extracellular-facing. Residues 607-630 (PQIISEGLYAIAVVLSFSRIAYIL) traverse the membrane as a helical segment. Residues 631 to 649 (PANESFGPLQISLGRTVKD) lie on the Cytoplasmic side of the membrane. The stretch at 634–663 (ESFGPLQISLGRTVKDIFKFMVLFIMVFFA) is one ANK 5 repeat. The chain crosses the membrane as a helical span at residues 650–673 (IFKFMVLFIMVFFAFMIGMFILYS). At 674–713 (YYLGAKVNAAFTTVEESFKTLFWSIFGLSEVTSVVLKYDH) the chain is on the extracellular side. The helical transmembrane segment at 714 to 739 (KFIENIGYVLYGIYNVTMVVVLLNML) threads the bilayer. Over 740-921 (IAMINSSYQE…KLNPSMLRCE (182 aa)) the chain is Cytoplasmic. Residues 850 to 870 (QIMKRLIKRYVLKAQVDKEND) form a binds to IP3R3 region. Positions 871, 874, 876, and 883 each coordinate Ca(2+).

Belongs to the transient receptor (TC 1.A.4) family. STrpC subfamily. TRPC3 sub-subfamily. Homotetramer. Interacts with ITPR1. Interacts with ITPR3. Interacts with MX1. Interacts with RNF24. Interacts with JPH2; the interaction is involved in maintaining Ca(2+) homeostasis in skeletal muscle and is mediated by JPH2 'Ser-165' phosphorylation. In terms of assembly, interacts with isoform short of TRPC1. Expressed predominantly in brain and at much lower levels in ovary, colon, small intestine, lung, prostate, placenta and testis.

The protein localises to the cell membrane. It catalyses the reaction Ca(2+)(in) = Ca(2+)(out). Its activity is regulated as follows. Activated by diacylglycerol (DAG) in a membrane-delimited fashion, independently of protein kinase C. Activated by inositol 1,4,5-triphosphate receptors (ITPR) with bound IP3. May be activated by internal calcium store depletion. Inhibited by intracellular Ca(2+). Its function is as follows. Forms a receptor-activated non-selective calcium permeant cation channel. Forms a receptor-activated non-selective calcium permeant cation channel. May be operated by a phosphatidylinositol second messenger system activated by receptor tyrosine kinases or G-protein coupled receptors. This Homo sapiens (Human) protein is Short transient receptor potential channel 3 (TRPC3).